A 702-amino-acid chain; its full sequence is Phosphoribosylformylglycinamidine synthase subunit PurL (702 aa).

H36 is a catalytic residue. Positions 39 and 80 each coordinate ATP. A Mg(2+)-binding site is contributed by E82. Residues 83–86 (SHNH) and R105 contribute to the substrate site. Residue H84 is the Proton acceptor of the active site. Position 106 (D106) interacts with Mg(2+). Q225 is a binding site for substrate. Residue D251 coordinates Mg(2+). Residue 293–295 (ETQ) coordinates substrate. ATP-binding residues include D468 and G505. Position 508 (S508) interacts with substrate.

Belongs to the FGAMS family. In terms of assembly, monomer. Part of the FGAM synthase complex composed of 1 PurL, 1 PurQ and 2 PurS subunits.

The protein resides in the cytoplasm. The catalysed reaction is N(2)-formyl-N(1)-(5-phospho-beta-D-ribosyl)glycinamide + L-glutamine + ATP + H2O = 2-formamido-N(1)-(5-O-phospho-beta-D-ribosyl)acetamidine + L-glutamate + ADP + phosphate + H(+). It participates in purine metabolism; IMP biosynthesis via de novo pathway; 5-amino-1-(5-phospho-D-ribosyl)imidazole from N(2)-formyl-N(1)-(5-phospho-D-ribosyl)glycinamide: step 1/2. Part of the phosphoribosylformylglycinamidine synthase complex involved in the purines biosynthetic pathway. Catalyzes the ATP-dependent conversion of formylglycinamide ribonucleotide (FGAR) and glutamine to yield formylglycinamidine ribonucleotide (FGAM) and glutamate. The FGAM synthase complex is composed of three subunits. PurQ produces an ammonia molecule by converting glutamine to glutamate. PurL transfers the ammonia molecule to FGAR to form FGAM in an ATP-dependent manner. PurS interacts with PurQ and PurL and is thought to assist in the transfer of the ammonia molecule from PurQ to PurL. In Metallosphaera sedula (strain ATCC 51363 / DSM 5348 / JCM 9185 / NBRC 15509 / TH2), this protein is Phosphoribosylformylglycinamidine synthase subunit PurL.